The primary structure comprises 236 residues: CDP-diacylglycerol--glycerol-3-phosphate 3-phosphatidyltransferase (236 aa).

Transmembrane regions (helical) follow at residues 39 to 59, 66 to 86, 120 to 140, 163 to 183, and 196 to 216; these read IFIA…GVLA, ISIS…TAVI, VLIA…VFIV, WLGK…CFVW, and GLFF…FSIW.

It belongs to the CDP-alcohol phosphatidyltransferase class-I family.

It localises to the cell membrane. The catalysed reaction is a CDP-1,2-diacyl-sn-glycerol + sn-glycerol 3-phosphate = a 1,2-diacyl-sn-glycero-3-phospho-(1'-sn-glycero-3'-phosphate) + CMP + H(+). Its pathway is phospholipid metabolism; phosphatidylglycerol biosynthesis; phosphatidylglycerol from CDP-diacylglycerol: step 1/2. In terms of biological role, this protein catalyzes the committed step to the synthesis of the acidic phospholipids. In Mycoplasma genitalium (strain ATCC 33530 / DSM 19775 / NCTC 10195 / G37) (Mycoplasmoides genitalium), this protein is CDP-diacylglycerol--glycerol-3-phosphate 3-phosphatidyltransferase (pgsA).